The chain runs to 273 residues: Inositol monophosphatase 1 (273 aa).

4 residues coordinate Mg(2+): E71, D91, V93, and D94. Residue E71 coordinates substrate. Residues 93-96, 194-196, and D221 each bind substrate; these read VDGT and GSC. D221 contributes to the Mg(2+) binding site.

This sequence belongs to the inositol monophosphatase superfamily. The cofactor is Mg(2+). As to expression, expressed in seedlings, flowers, young and matures green fruits. Detected in roots and stems.

The catalysed reaction is a myo-inositol phosphate + H2O = myo-inositol + phosphate. It participates in polyol metabolism; myo-inositol biosynthesis; myo-inositol from D-glucose 6-phosphate: step 2/2. Responsible for the provision of inositol required for synthesis of phosphatidylinositol and polyphosphoinositides. In Solanum lycopersicum (Tomato), this protein is Inositol monophosphatase 1 (IMP1).